The sequence spans 406 residues: Ribonuclease D (406 aa).

One can recognise a 3'-5' exonuclease domain in the interval 26–193; sequence LITQTTDLEI…VYLLLKKQLE (168 aa). Residues 231–312 enclose the HRDC domain; that stretch reads KPRELAVLQK…HEGLEVDLAT (82 aa).

It belongs to the RNase D family. The cofactor is a divalent metal cation.

The protein resides in the cytoplasm. It carries out the reaction Exonucleolytic cleavage that removes extra residues from the 3'-terminus of tRNA to produce 5'-mononucleotides.. Exonuclease involved in the 3' processing of various precursor tRNAs. Initiates hydrolysis at the 3'-terminus of an RNA molecule and releases 5'-mononucleotides. The chain is Ribonuclease D from Bartonella henselae (strain ATCC 49882 / DSM 28221 / CCUG 30454 / Houston 1) (Rochalimaea henselae).